Reading from the N-terminus, the 438-residue chain is GDP-mannose 6-dehydrogenase (438 aa).

Positions 10, 11, 30, 35, 86, and 124 each coordinate NAD(+). GDP-alpha-D-mannuronate is bound by residues E161, K210, N214, H217, N225, Y256, Y257, R259, F262, and G265. The active site involves C268. K271 provides a ligand contact to NAD(+). K324 is a binding site for GDP-alpha-D-mannuronate. R331 contributes to the NAD(+) binding site.

The protein belongs to the UDP-glucose/GDP-mannose dehydrogenase family.

The catalysed reaction is GDP-alpha-D-mannose + 2 NAD(+) + H2O = GDP-alpha-D-mannuronate + 2 NADH + 3 H(+). Its pathway is glycan biosynthesis; alginate biosynthesis. Its function is as follows. Catalyzes the oxidation of guanosine diphospho-D-mannose (GDP-D-mannose) to GDP-D-mannuronic acid, a precursor for alginate polymerization. The alginate layer causes a mucoid phenotype and provides a protective barrier against host immune defenses and antibiotics. The polypeptide is GDP-mannose 6-dehydrogenase (algD) (Pseudomonas syringae pv. syringae).